A 36-amino-acid polypeptide reads, in one-letter code: Dermonecrotic toxin LgSicTox-beta-LOXN2 (36 aa).

It belongs to the arthropod phospholipase D family. Class II subfamily. The cofactor is Mg(2+). In terms of processing, contains 2 disulfide bonds. Expressed by the venom gland.

It localises to the secreted. It catalyses the reaction an N-(acyl)-sphingosylphosphocholine = an N-(acyl)-sphingosyl-1,3-cyclic phosphate + choline. It carries out the reaction an N-(acyl)-sphingosylphosphoethanolamine = an N-(acyl)-sphingosyl-1,3-cyclic phosphate + ethanolamine. The enzyme catalyses a 1-acyl-sn-glycero-3-phosphocholine = a 1-acyl-sn-glycero-2,3-cyclic phosphate + choline. The catalysed reaction is a 1-acyl-sn-glycero-3-phosphoethanolamine = a 1-acyl-sn-glycero-2,3-cyclic phosphate + ethanolamine. Its function is as follows. Dermonecrotic toxins cleave the phosphodiester linkage between the phosphate and headgroup of certain phospholipids (sphingolipid and lysolipid substrates), forming an alcohol (often choline) and a cyclic phosphate. This toxin acts on sphingomyelin (SM). It may also act on ceramide phosphoethanolamine (CPE), lysophosphatidylcholine (LPC) and lysophosphatidylethanolamine (LPE), but not on lysophosphatidylserine (LPS), and lysophosphatidylglycerol (LPG). It acts by transphosphatidylation, releasing exclusively cyclic phosphate products as second products. Induces dermonecrosis, hemolysis, increased vascular permeability, edema, inflammatory response, and platelet aggregation. This is Dermonecrotic toxin LgSicTox-beta-LOXN2 from Loxosceles gaucho (Spider).